We begin with the raw amino-acid sequence, 209 residues long: Ribosomal RNA large subunit methyltransferase E (209 aa).

Gly63, Trp65, Asp83, Asp99, and Asp124 together coordinate S-adenosyl-L-methionine. Lys164 serves as the catalytic Proton acceptor.

The protein belongs to the class I-like SAM-binding methyltransferase superfamily. RNA methyltransferase RlmE family.

Its subcellular location is the cytoplasm. The enzyme catalyses uridine(2552) in 23S rRNA + S-adenosyl-L-methionine = 2'-O-methyluridine(2552) in 23S rRNA + S-adenosyl-L-homocysteine + H(+). Its function is as follows. Specifically methylates the uridine in position 2552 of 23S rRNA at the 2'-O position of the ribose in the fully assembled 50S ribosomal subunit. This is Ribosomal RNA large subunit methyltransferase E from Vibrio vulnificus (strain CMCP6).